The following is a 160-amino-acid chain: Tic20 family protein (160 aa).

A run of 4 helical transmembrane segments spans residues 13–33 (FFSA…GGFL), 53–73 (FYYQ…MAVV), 87–107 (MQAI…AYVI), and 122–142 (NFAF…SVLG).

It belongs to the Tic20 family.

The protein resides in the cell membrane. The chain is Tic20 family protein from Synechocystis sp. (strain ATCC 27184 / PCC 6803 / Kazusa).